Here is a 436-residue protein sequence, read N- to C-terminus: Citrate synthase (436 aa).

Residues H311 and D370 contribute to the active site.

It belongs to the citrate synthase family.

The enzyme catalyses oxaloacetate + acetyl-CoA + H2O = citrate + CoA + H(+). Its pathway is carbohydrate metabolism; tricarboxylic acid cycle; isocitrate from oxaloacetate: step 1/2. This is Citrate synthase (gltA) from Rickettsia typhi (strain ATCC VR-144 / Wilmington).